A 461-amino-acid chain; its full sequence is L-seryl-tRNA(Sec) selenium transferase (461 aa).

K294 carries the post-translational modification N6-(pyridoxal phosphate)lysine.

This sequence belongs to the SelA family. Pyridoxal 5'-phosphate is required as a cofactor.

It is found in the cytoplasm. It catalyses the reaction L-seryl-tRNA(Sec) + selenophosphate + H(+) = L-selenocysteinyl-tRNA(Sec) + phosphate. It functions in the pathway aminoacyl-tRNA biosynthesis; selenocysteinyl-tRNA(Sec) biosynthesis; selenocysteinyl-tRNA(Sec) from L-seryl-tRNA(Sec) (bacterial route): step 1/1. In terms of biological role, converts seryl-tRNA(Sec) to selenocysteinyl-tRNA(Sec) required for selenoprotein biosynthesis. In Actinobacillus pleuropneumoniae serotype 5b (strain L20), this protein is L-seryl-tRNA(Sec) selenium transferase.